The primary structure comprises 277 residues: Large ribosomal subunit protein uL2 (277 aa).

The segment at 219–277 (TVRGSVMNPNDHPHGGGEGRAPIGRKSPMSPWGKPTLGFKTRKKKNKSDKFIVRRRKNK) is disordered. Residues 258 to 277 (KTRKKKNKSDKFIVRRRKNK) are compositionally biased toward basic residues.

Belongs to the universal ribosomal protein uL2 family. As to quaternary structure, part of the 50S ribosomal subunit. Forms a bridge to the 30S subunit in the 70S ribosome.

Functionally, one of the primary rRNA binding proteins. Required for association of the 30S and 50S subunits to form the 70S ribosome, for tRNA binding and peptide bond formation. It has been suggested to have peptidyltransferase activity; this is somewhat controversial. Makes several contacts with the 16S rRNA in the 70S ribosome. The protein is Large ribosomal subunit protein uL2 of Bacillus subtilis (strain 168).